The following is an 843-amino-acid chain: Protein P (843 aa).

The tract at residues 1 to 177 is terminal protein domain (TP); sequence MPLSYPHFRK…FCGSQYSWEQ (177 aa). The spacer stretch occupies residues 178–346; that stretch reads ELQHGSTSLN…YCLSHIINLL (169 aa). 2 disordered regions span residues 228 to 255 and 284 to 314; these read KQGQ…RWPA and EANP…SVGS. Over residues 239-249 the composition is skewed to basic residues; it reads RSGRLRSRVHT. A polymerase/reverse transcriptase domain (RT) region spans residues 347–690; sequence EDWGPCYEHG…YMNLYPVARQ (344 aa). Residues 357–600 form the Reverse transcriptase domain; the sequence is EHHIRTPRTP…YNLHFMGYVI (244 aa). Mg(2+) is bound by residues D429, D551, and D552.

It belongs to the hepadnaviridae P protein family.

The catalysed reaction is DNA(n) + a 2'-deoxyribonucleoside 5'-triphosphate = DNA(n+1) + diphosphate. It carries out the reaction Endonucleolytic cleavage to 5'-phosphomonoester.. Its activity is regulated as follows. Activated by host HSP70 and HSP40 in vitro to be able to bind the epsilon loop of the pgRNA. Because deletion of the RNase H region renders the protein partly chaperone-independent, the chaperones may be needed indirectly to relieve occlusion of the RNA-binding site by this domain. Inhibited by several reverse-transcriptase inhibitors: Lamivudine, Adefovir and Entecavir. Functionally, multifunctional enzyme that converts the viral RNA genome into dsDNA in viral cytoplasmic capsids. This enzyme displays a DNA polymerase activity that can copy either DNA or RNA templates, and a ribonuclease H (RNase H) activity that cleaves the RNA strand of RNA-DNA heteroduplexes in a partially processive 3'- to 5'-endonucleasic mode. Neo-synthesized pregenomic RNA (pgRNA) are encapsidated together with the P protein, and reverse-transcribed inside the nucleocapsid. Initiation of reverse-transcription occurs first by binding the epsilon loop on the pgRNA genome, and is initiated by protein priming, thereby the 5'-end of (-)DNA is covalently linked to P protein. Partial (+)DNA is synthesized from the (-)DNA template and generates the relaxed circular DNA (RC-DNA) genome. After budding and infection, the RC-DNA migrates in the nucleus, and is converted into a plasmid-like covalently closed circular DNA (cccDNA). The activity of P protein does not seem to be necessary for cccDNA generation, and is presumably released from (+)DNA by host nuclear DNA repair machinery. The sequence is that of Protein P from Hepatitis B virus genotype F2 subtype adw4q (isolate Senegal/9203) (HBV-F).